Reading from the N-terminus, the 138-residue chain is Nucleoside diphosphate kinase (138 aa).

Lys-11, Phe-59, Arg-87, Thr-93, Arg-104, and Asn-114 together coordinate ATP. His-117 acts as the Pros-phosphohistidine intermediate in catalysis.

Belongs to the NDK family. The cofactor is Mg(2+).

Its subcellular location is the cytoplasm. It catalyses the reaction a 2'-deoxyribonucleoside 5'-diphosphate + ATP = a 2'-deoxyribonucleoside 5'-triphosphate + ADP. The enzyme catalyses a ribonucleoside 5'-diphosphate + ATP = a ribonucleoside 5'-triphosphate + ADP. In terms of biological role, major role in the synthesis of nucleoside triphosphates other than ATP. The ATP gamma phosphate is transferred to the NDP beta phosphate via a ping-pong mechanism, using a phosphorylated active-site intermediate. The sequence is that of Nucleoside diphosphate kinase from Saccharolobus islandicus (strain Y.N.15.51 / Yellowstone #2) (Sulfolobus islandicus).